Here is a 72-residue protein sequence, read N- to C-terminus: Gene 35 protein (72 aa).

In Mycobacterium phage L5 (Mycobacteriophage L5), this protein is Gene 35 protein (35).